A 384-amino-acid chain; its full sequence is Mannitol-1-phosphate 5-dehydrogenase (384 aa).

Residue 5–16 (AVHFGAGNIGRG) coordinates NAD(+).

The protein belongs to the mannitol dehydrogenase family.

The enzyme catalyses D-mannitol 1-phosphate + NAD(+) = beta-D-fructose 6-phosphate + NADH + H(+). The chain is Mannitol-1-phosphate 5-dehydrogenase from Vibrio cholerae serotype O1 (strain ATCC 39541 / Classical Ogawa 395 / O395).